Reading from the N-terminus, the 369-residue chain is Anhydro-N-acetylmuramic acid kinase (369 aa).

12–19 (GTSLDGVD) contributes to the ATP binding site.

This sequence belongs to the anhydro-N-acetylmuramic acid kinase family.

It catalyses the reaction 1,6-anhydro-N-acetyl-beta-muramate + ATP + H2O = N-acetyl-D-muramate 6-phosphate + ADP + H(+). The protein operates within amino-sugar metabolism; 1,6-anhydro-N-acetylmuramate degradation. It functions in the pathway cell wall biogenesis; peptidoglycan recycling. Catalyzes the specific phosphorylation of 1,6-anhydro-N-acetylmuramic acid (anhMurNAc) with the simultaneous cleavage of the 1,6-anhydro ring, generating MurNAc-6-P. Is required for the utilization of anhMurNAc either imported from the medium or derived from its own cell wall murein, and thus plays a role in cell wall recycling. The sequence is that of Anhydro-N-acetylmuramic acid kinase from Escherichia coli O157:H7.